The sequence spans 25 residues: HEDNAGIAVYWGQDAREGDLVTACN.

In terms of assembly, homodimer.

It catalyses the reaction Random endo-hydrolysis of N-acetyl-beta-D-glucosaminide (1-&gt;4)-beta-linkages in chitin and chitodextrins.. Its function is as follows. Alpha-amylase inhibitor, active against Z.subfasciatus alpha-amylase (ZSA) but not porcine pancreatic alpha-amylase (PPA). Has chitinase activity. The chain is Chitinolytic alpha-amylase inhibitor PvCAI from Phaseolus vulgaris (Kidney bean).